The sequence spans 39 residues: Colipase (39 aa).

2 disulfide bridges follow: C16–C27 and C22–C38.

The protein belongs to the colipase family. In terms of assembly, forms a 1:1 stoichiometric complex with pancreatic lipase. As to expression, expressed by the pancreas.

It localises to the secreted. In terms of biological role, colipase is a cofactor of pancreatic lipase. It allows the lipase to anchor itself to the lipid-water interface. Without colipase the enzyme is washed off by bile salts, which have an inhibitory effect on the lipase. The chain is Colipase from Squalus acanthias (Spiny dogfish).